A 2251-amino-acid chain; its full sequence is U3 small nucleolar RNA-associated protein 10 (2251 aa).

An HEAT repeat occupies 945–983; that stretch reads VVPLLLTALADAEAAIRLAAIACLAHILAICKYAGDLAK. 2 helical membrane-spanning segments follow: residues 962-982 and 1460-1480; these read LAAI…GDLA and LLVD…LLVD.

The protein belongs to the HEATR1/UTP10 family. In terms of assembly, component of the ribosomal small subunit (SSU) processome.

It localises to the nucleus. Its subcellular location is the nucleolus. It is found in the membrane. Its function is as follows. Involved in nucleolar processing of pre-18S ribosomal RNA. Involved in ribosome biosynthesis. The protein is U3 small nucleolar RNA-associated protein 10 of Mycosarcoma maydis (Corn smut fungus).